Consider the following 348-residue polypeptide: Probable dual-specificity RNA methyltransferase RlmN (348 aa).

The Proton acceptor role is filled by E89. Residues 95-330 (ERDHYTLCVS…NFVRFSKGVE (236 aa)) form the Radical SAM core domain. A disulfide bond links C102 and C335. [4Fe-4S] cluster contacts are provided by C109, C113, and C116. Residues 157–158 (GE), S189, 214–216 (SLN), and N292 contribute to the S-adenosyl-L-methionine site. The S-methylcysteine intermediate role is filled by C335.

This sequence belongs to the radical SAM superfamily. RlmN family. [4Fe-4S] cluster is required as a cofactor.

It is found in the cytoplasm. It catalyses the reaction adenosine(2503) in 23S rRNA + 2 reduced [2Fe-2S]-[ferredoxin] + 2 S-adenosyl-L-methionine = 2-methyladenosine(2503) in 23S rRNA + 5'-deoxyadenosine + L-methionine + 2 oxidized [2Fe-2S]-[ferredoxin] + S-adenosyl-L-homocysteine. It carries out the reaction adenosine(37) in tRNA + 2 reduced [2Fe-2S]-[ferredoxin] + 2 S-adenosyl-L-methionine = 2-methyladenosine(37) in tRNA + 5'-deoxyadenosine + L-methionine + 2 oxidized [2Fe-2S]-[ferredoxin] + S-adenosyl-L-homocysteine. Its function is as follows. Specifically methylates position 2 of adenine 2503 in 23S rRNA and position 2 of adenine 37 in tRNAs. This Aquifex aeolicus (strain VF5) protein is Probable dual-specificity RNA methyltransferase RlmN.